The sequence spans 242 residues: 4-hydroxy-tetrahydrodipicolinate reductase (242 aa).

NAD(+) is bound by residues 8-13, 75-77, and 99-102; these read GAKGRM, GTT, and ATNM. His-131 (proton donor/acceptor) is an active-site residue. A (S)-2,3,4,5-tetrahydrodipicolinate-binding site is contributed by His-132. Residue Lys-135 is the Proton donor of the active site. 141 to 142 lines the (S)-2,3,4,5-tetrahydrodipicolinate pocket; sequence GT.

Belongs to the DapB family.

The protein localises to the cytoplasm. It carries out the reaction (S)-2,3,4,5-tetrahydrodipicolinate + NAD(+) + H2O = (2S,4S)-4-hydroxy-2,3,4,5-tetrahydrodipicolinate + NADH + H(+). The enzyme catalyses (S)-2,3,4,5-tetrahydrodipicolinate + NADP(+) + H2O = (2S,4S)-4-hydroxy-2,3,4,5-tetrahydrodipicolinate + NADPH + H(+). The protein operates within amino-acid biosynthesis; L-lysine biosynthesis via DAP pathway; (S)-tetrahydrodipicolinate from L-aspartate: step 4/4. Its function is as follows. Catalyzes the conversion of 4-hydroxy-tetrahydrodipicolinate (HTPA) to tetrahydrodipicolinate. The protein is 4-hydroxy-tetrahydrodipicolinate reductase of Campylobacter jejuni subsp. jejuni serotype O:2 (strain ATCC 700819 / NCTC 11168).